A 347-amino-acid polypeptide reads, in one-letter code: N-acetyl-gamma-glutamyl-phosphate reductase (347 aa).

The active site involves C152.

Belongs to the NAGSA dehydrogenase family. Type 1 subfamily.

The protein resides in the cytoplasm. The enzyme catalyses N-acetyl-L-glutamate 5-semialdehyde + phosphate + NADP(+) = N-acetyl-L-glutamyl 5-phosphate + NADPH + H(+). The protein operates within amino-acid biosynthesis; L-arginine biosynthesis; N(2)-acetyl-L-ornithine from L-glutamate: step 3/4. Its function is as follows. Catalyzes the NADPH-dependent reduction of N-acetyl-5-glutamyl phosphate to yield N-acetyl-L-glutamate 5-semialdehyde. This Ehrlichia ruminantium (strain Gardel) protein is N-acetyl-gamma-glutamyl-phosphate reductase.